The primary structure comprises 219 residues: Chalcone--flavanone isomerase (219 aa).

Substrate-binding residues include threonine 50, asparagine 115, and serine 188.

This sequence belongs to the chalcone isomerase family.

It carries out the reaction a chalcone = a flavanone.. It functions in the pathway secondary metabolite biosynthesis; flavonoid biosynthesis. Catalyzes the intramolecular cyclization of bicyclic chalcones into tricyclic (S)-flavanones. Responsible for the isomerization of 4,2',4',6'-tetrahydroxychalcone (also termed chalcone) into naringenin. This is Chalcone--flavanone isomerase (CHI) from Clitoria ternatea (Butterfly pea).